The chain runs to 453 residues: Phosphatidylserine decarboxylase proenzyme 1, mitochondrial (453 aa).

A mitochondrion-targeting transit peptide spans 1–29 (MKPRFPQNVYFLARYSYLRRFQHSQRRTF). Over 30–74 (SSFLNNIRSNYSGARASPLGGSSGAGAGAGGGGTGDSKGNAFLVP) the chain is Mitochondrial matrix. A helical transmembrane segment spans residues 75-93 (GATMATILMLGALHARRLY). At 94–453 (EDKKIEEKRE…GQALGRWKEE (360 aa)) the chain is on the mitochondrial intermembrane side. Active-site charge relay system; for autoendoproteolytic cleavage activity residues include Asp199, His296, and Ser408. Ser408 functions as the Schiff-base intermediate with substrate; via pyruvic acid; for decarboxylase activity in the catalytic mechanism. Pyruvic acid (Ser); by autocatalysis is present on Ser408.

Belongs to the phosphatidylserine decarboxylase family. PSD-B subfamily. Eukaryotic type I sub-subfamily. In terms of assembly, heterodimer of a large membrane-associated beta subunit and a small pyruvoyl-containing alpha subunit. Requires pyruvate as cofactor. Post-translationally, is synthesized initially as an inactive proenzyme. Formation of the active enzyme involves a self-maturation process in which the active site pyruvoyl group is generated from an internal serine residue via an autocatalytic post-translational modification. Two non-identical subunits are generated from the proenzyme in this reaction, and the pyruvate is formed at the N-terminus of the alpha chain, which is derived from the carboxyl end of the proenzyme. The autoendoproteolytic cleavage occurs by a canonical serine protease mechanism, in which the side chain hydroxyl group of the serine supplies its oxygen atom to form the C-terminus of the beta chain, while the remainder of the serine residue undergoes an oxidative deamination to produce ammonia and the pyruvoyl prosthetic group on the alpha chain. During this reaction, the Ser that is part of the protease active site of the proenzyme becomes the pyruvoyl prosthetic group, which constitutes an essential element of the active site of the mature decarboxylase. In terms of tissue distribution, expressed in roots, leaves, stems and flowers.

The protein resides in the mitochondrion. Its subcellular location is the mitochondrion inner membrane. The enzyme catalyses a 1,2-diacyl-sn-glycero-3-phospho-L-serine + H(+) = a 1,2-diacyl-sn-glycero-3-phosphoethanolamine + CO2. It participates in phospholipid metabolism; phosphatidylethanolamine biosynthesis; phosphatidylethanolamine from CDP-diacylglycerol: step 2/2. Its function is as follows. Catalyzes the formation of phosphatidylethanolamine (PtdEtn) from phosphatidylserine (PtdSer). Plays a central role in phospholipid metabolism and in the interorganelle trafficking of phosphatidylserine. Contributes only to a minor proportion of PtdEtn production. This chain is Phosphatidylserine decarboxylase proenzyme 1, mitochondrial (PSD1), found in Arabidopsis thaliana (Mouse-ear cress).